A 542-amino-acid chain; its full sequence is MASVETLLQGVTISGPIEEHQRKILTPQALSFVALLHRSFNQTRKNLLERRQLRQAEIDRGVLPDFLPETKHIRENPTWKGAPPAPGLVDRRVEITGPTDRKMVVNALNSDVYTYMADFEDSSAPTWANMVNGQVNLYDAIRRQIDFKQGPKEYKLRTDRTLPTLIVRPRGWHLEEKHVTIDGEPVSGSLFDFGLYFFHNAKELVQRGFGPYFYLPKMESHLEARLWNDAFNLAQDYVGIPRGTIRGTVLIETILAAFEMDEIIYELREHSSGLNCGRWDYIFSTIKKFRNHSSFVLPDRSCVTMTVPFMDAYVKLLIQTCHKRGVHAMGGMAAQIPIKDDKAANDKAMEGVRADKLREARAGHDGTWVAHPALASIALEVFNKHMPTPNQLFNRREDVKIGQQDLLNMNVPGSITEEGIRKNLNIGLGYMEAWIRGVGCVPINYLMEDAATAEVSRSQLWQWVKHGVTTAEGKRVDKSYALKLLKEQTDELASKAPQGNKFNLAAQYFATQVTGEDYADFLTSLLYNEITSAGNSLPASKL.

Arginine 168 functions as the Proton acceptor in the catalytic mechanism. Aspartate 449 functions as the Proton donor in the catalytic mechanism. Residues 540–542 (SKL) carry the Microbody targeting signal motif.

The protein belongs to the malate synthase family.

Its subcellular location is the glyoxysome. It catalyses the reaction glyoxylate + acetyl-CoA + H2O = (S)-malate + CoA + H(+). It participates in carbohydrate metabolism; glyoxylate cycle; (S)-malate from isocitrate: step 2/2. The polypeptide is Malate synthase, glyoxysomal (acu-9) (Neurospora crassa (strain ATCC 24698 / 74-OR23-1A / CBS 708.71 / DSM 1257 / FGSC 987)).